A 641-amino-acid polypeptide reads, in one-letter code: ATP-dependent DNA helicase PIF1 (641 aa).

Residues 1 to 180 are PINT; sequence MLSGIEAAAG…LVKRPVEPQA (180 aa). Phosphoserine occurs at positions 27 and 151. The hydrolyzes ATP in the presence of both magnesium and single-stranded DNA; weak activity in the presence of RNA or double-stranded DNA; No unwinding activity stretch occupies residues 167–641; that stretch reads PDTTLVKRPV…SDQENMDPIL (475 aa). Residues 173-192 are disordered; that stretch reads KRPVEPQAGAEPSTEAPRWP. ATP is bound at residue 228-235; that stretch reads GSAGTGKS. The DNA-binding element occupies 577 to 596; it reads QAYVALSRARSLQGLRVLDF. The interval 622-641 is disordered; the sequence is LESPDDDEAASDQENMDPIL. Positions 624 to 641 are enriched in acidic residues; sequence SPDDDEAASDQENMDPIL.

The protein belongs to the helicase family. PIF1 subfamily. As to quaternary structure, monomer. Interacts with telomerase. It depends on Mg(2+) as a cofactor. As to expression, weak ubiquitous expression.

It is found in the nucleus. It localises to the mitochondrion. It carries out the reaction Couples ATP hydrolysis with the unwinding of duplex DNA at the replication fork by translocating in the 5'-3' direction. This creates two antiparallel DNA single strands (ssDNA). The leading ssDNA polymer is the template for DNA polymerase III holoenzyme which synthesizes a continuous strand.. It catalyses the reaction ATP + H2O = ADP + phosphate + H(+). In terms of biological role, DNA-dependent ATPase and 5'-3' DNA helicase required for the maintenance of both mitochondrial and nuclear genome stability. Efficiently unwinds G-quadruplex (G4) DNA structures and forked RNA-DNA hybrids. Resolves G4 structures, preventing replication pausing and double-strand breaks (DSBs) at G4 motifs. Involved in the maintenance of telomeric DNA. Inhibits telomere elongation, de novo telomere formation and telomere addition to DSBs via catalytic inhibition of telomerase. Reduces the processivity of telomerase by displacing active telomerase from DNA ends. Releases telomerase by unwinding the short telomerase RNA/telomeric DNA hybrid that is the intermediate in the telomerase reaction. Possesses an intrinsic strand annealing activity. This is ATP-dependent DNA helicase PIF1 from Homo sapiens (Human).